Reading from the N-terminus, the 318-residue chain is Acetyl-coenzyme A carboxylase carboxyl transferase subunit alpha (318 aa).

Positions 39 to 297 (RLEKRSQTAL…SEALKAMVGK (259 aa)) constitute a CoA carboxyltransferase C-terminal domain.

It belongs to the AccA family. In terms of assembly, acetyl-CoA carboxylase is a heterohexamer composed of biotin carboxyl carrier protein (AccB), biotin carboxylase (AccC) and two subunits each of ACCase subunit alpha (AccA) and ACCase subunit beta (AccD).

It is found in the cytoplasm. The enzyme catalyses N(6)-carboxybiotinyl-L-lysyl-[protein] + acetyl-CoA = N(6)-biotinyl-L-lysyl-[protein] + malonyl-CoA. The protein operates within lipid metabolism; malonyl-CoA biosynthesis; malonyl-CoA from acetyl-CoA: step 1/1. Functionally, component of the acetyl coenzyme A carboxylase (ACC) complex. First, biotin carboxylase catalyzes the carboxylation of biotin on its carrier protein (BCCP) and then the CO(2) group is transferred by the carboxyltransferase to acetyl-CoA to form malonyl-CoA. This Bartonella tribocorum (strain CIP 105476 / IBS 506) protein is Acetyl-coenzyme A carboxylase carboxyl transferase subunit alpha.